The sequence spans 491 residues: Eupatolide synthase (491 aa).

Residues 7–27 traverse the membrane as a helical; Signal-anchor for type II membrane protein segment; the sequence is LPSWLLPAVVILTISCILMLW. Cys430 is a binding site for heme.

The protein belongs to the cytochrome P450 family. Heme is required as a cofactor. In terms of tissue distribution, expressed in leaf primordia.

It localises to the membrane. The enzyme catalyses 8beta-hydroxygermacra-1(10),4,11(13)-trien-12-oate + reduced [NADPH--hemoprotein reductase] + O2 = eupatolide + oxidized [NADPH--hemoprotein reductase] + 2 H2O. Its pathway is secondary metabolite biosynthesis; terpenoid biosynthesis. In terms of biological role, involved in the biosynthesis of germacrene-derived sesquiterpene lactones. Hydroxylates 8-beta-hydroxy-germacrene A acid to 6-alpha,8-beta-hydroxy-germacrene A acid, which, in turn, undergo spontaneous lactonization to become eupatolide. This chain is Eupatolide synthase, found in Helianthus annuus (Common sunflower).